The following is a 468-amino-acid chain: RUS family member 1 (468 aa).

Residue Ala2 is modified to N-acetylalanine. Thr49 is subject to Phosphothreonine. A helical transmembrane segment spans residues 247–267; that stretch reads LLMLPLVSGCPGFSLGCFFFL.

This sequence belongs to the RUS1 family.

It is found in the membrane. The protein is RUS family member 1 of Homo sapiens (Human).